Reading from the N-terminus, the 176-residue chain is uncharacterized protein (176 aa).

A compositionally biased stretch (polar residues) spans methionine 1–proline 12. Disordered regions lie at residues methionine 1–glutamine 88 and valine 109–serine 132. Positions threonine 13–asparagine 24 are enriched in low complexity. Over residues serine 37–lysine 46 the composition is skewed to polar residues. The span at proline 47–glutamine 88 shows a compositional bias: low complexity.

This is an uncharacterized protein from Dictyostelium discoideum (Social amoeba).